Consider the following 1070-residue polypeptide: DNA-directed RNA polymerase subunit beta (1070 aa).

The protein belongs to the RNA polymerase beta chain family. In plastids the minimal PEP RNA polymerase catalytic core is composed of four subunits: alpha, beta, beta', and beta''. When a (nuclear-encoded) sigma factor is associated with the core the holoenzyme is formed, which can initiate transcription.

It is found in the plastid. The protein localises to the chloroplast. The enzyme catalyses RNA(n) + a ribonucleoside 5'-triphosphate = RNA(n+1) + diphosphate. Functionally, DNA-dependent RNA polymerase catalyzes the transcription of DNA into RNA using the four ribonucleoside triphosphates as substrates. The protein is DNA-directed RNA polymerase subunit beta of Daucus carota (Wild carrot).